Consider the following 213-residue polypeptide: Uridine kinase (213 aa).

15–22 (GASASGKS) lines the ATP pocket.

This sequence belongs to the uridine kinase family.

Its subcellular location is the cytoplasm. The catalysed reaction is uridine + ATP = UMP + ADP + H(+). It carries out the reaction cytidine + ATP = CMP + ADP + H(+). It functions in the pathway pyrimidine metabolism; CTP biosynthesis via salvage pathway; CTP from cytidine: step 1/3. The protein operates within pyrimidine metabolism; UMP biosynthesis via salvage pathway; UMP from uridine: step 1/1. The polypeptide is Uridine kinase (Proteus mirabilis (strain HI4320)).